We begin with the raw amino-acid sequence, 402 residues long: S-adenosylmethionine synthase (402 aa).

Residue 140–145 coordinates ATP; the sequence is GNGSID.

It belongs to the AdoMet synthase 2 family. Requires Mg(2+) as cofactor.

The enzyme catalyses L-methionine + ATP + H2O = S-adenosyl-L-methionine + phosphate + diphosphate. Its pathway is amino-acid biosynthesis; S-adenosyl-L-methionine biosynthesis; S-adenosyl-L-methionine from L-methionine: step 1/1. Its function is as follows. Catalyzes the formation of S-adenosylmethionine from methionine and ATP. The polypeptide is S-adenosylmethionine synthase (Picrophilus torridus (strain ATCC 700027 / DSM 9790 / JCM 10055 / NBRC 100828 / KAW 2/3)).